Consider the following 766-residue polypeptide: Phosphoribosylformylglycinamidine synthase subunit PurL (766 aa).

The active site involves His66. Tyr69 and Lys113 together coordinate ATP. Residue Glu115 participates in Mg(2+) binding. Residues 116 to 119 (SHNH) and Arg138 each bind substrate. His117 (proton acceptor) is an active-site residue. Asp139 lines the Mg(2+) pocket. Gln264 is a binding site for substrate. Asp292 lines the Mg(2+) pocket. 336-338 (ESQ) lines the substrate pocket. Residues Asn524 and Gly561 each contribute to the ATP site. A Mg(2+)-binding site is contributed by Asn562. Substrate is bound at residue Ser564.

It belongs to the FGAMS family. Monomer. Part of the FGAM synthase complex composed of 1 PurL, 1 PurQ and 2 PurS subunits.

The protein localises to the cytoplasm. It catalyses the reaction N(2)-formyl-N(1)-(5-phospho-beta-D-ribosyl)glycinamide + L-glutamine + ATP + H2O = 2-formamido-N(1)-(5-O-phospho-beta-D-ribosyl)acetamidine + L-glutamate + ADP + phosphate + H(+). The protein operates within purine metabolism; IMP biosynthesis via de novo pathway; 5-amino-1-(5-phospho-D-ribosyl)imidazole from N(2)-formyl-N(1)-(5-phospho-D-ribosyl)glycinamide: step 1/2. Its function is as follows. Part of the phosphoribosylformylglycinamidine synthase complex involved in the purines biosynthetic pathway. Catalyzes the ATP-dependent conversion of formylglycinamide ribonucleotide (FGAR) and glutamine to yield formylglycinamidine ribonucleotide (FGAM) and glutamate. The FGAM synthase complex is composed of three subunits. PurQ produces an ammonia molecule by converting glutamine to glutamate. PurL transfers the ammonia molecule to FGAR to form FGAM in an ATP-dependent manner. PurS interacts with PurQ and PurL and is thought to assist in the transfer of the ammonia molecule from PurQ to PurL. The polypeptide is Phosphoribosylformylglycinamidine synthase subunit PurL (Mycobacterium tuberculosis (strain CDC 1551 / Oshkosh)).